The chain runs to 335 residues: Type 1 fimbrin D-mannose specific adhesin (335 aa).

Residues 1–22 (MKIYSALLLAGTALFFTHPALA) form the signal peptide.

It belongs to the fimbrial protein family.

The protein localises to the fimbrium. Its function is as follows. Involved in regulation of length and mediation of adhesion of type 1 fimbriae (but not necessary for the production of fimbriae). A mannose-binding adhesin. The chain is Type 1 fimbrin D-mannose specific adhesin (fimH) from Salmonella typhimurium (strain LT2 / SGSC1412 / ATCC 700720).